The primary structure comprises 366 residues: GTPase Obg (366 aa).

One can recognise an Obg domain in the interval 1–161; it reads MRFVDEARIQ…FNLRLELKIL (161 aa). The interval 121–148 is disordered; it reads SGGRGGKGNEHFKSSTMRAPRFSQPGEP. Residues 162 to 334 enclose the OBG-type G domain; that stretch reads ADAGLIGLPN…LVQELWQVCE (173 aa). GTP-binding positions include 168-175, 193-197, 217-220, 287-290, and 315-317; these read GLPNAGKS, FTTLT, DIPG, NKID, and SAR. Positions 175 and 195 each coordinate Mg(2+).

The protein belongs to the TRAFAC class OBG-HflX-like GTPase superfamily. OBG GTPase family. As to quaternary structure, monomer. The cofactor is Mg(2+).

Its subcellular location is the cytoplasm. In terms of biological role, an essential GTPase which binds GTP, GDP and possibly (p)ppGpp with moderate affinity, with high nucleotide exchange rates and a fairly low GTP hydrolysis rate. Plays a role in control of the cell cycle, stress response, ribosome biogenesis and in those bacteria that undergo differentiation, in morphogenesis control. This chain is GTPase Obg, found in Desulfovibrio desulfuricans (strain ATCC 27774 / DSM 6949 / MB).